The following is a 212-amino-acid chain: Large ribosomal subunit protein uL3 (212 aa).

Q153 is modified (N5-methylglutamine).

This sequence belongs to the universal ribosomal protein uL3 family. Part of the 50S ribosomal subunit. Forms a cluster with proteins L14 and L19. Methylated by PrmB.

Its function is as follows. One of the primary rRNA binding proteins, it binds directly near the 3'-end of the 23S rRNA, where it nucleates assembly of the 50S subunit. This Colwellia psychrerythraea (strain 34H / ATCC BAA-681) (Vibrio psychroerythus) protein is Large ribosomal subunit protein uL3.